We begin with the raw amino-acid sequence, 56 residues long: Keratin-associated protein 20-1 (56 aa).

The protein belongs to the KRTAP type 20 family. Interacts with hair keratins.

Functionally, in the hair cortex, hair keratin intermediate filaments are embedded in an interfilamentous matrix, consisting of hair keratin-associated proteins (KRTAP), which are essential for the formation of a rigid and resistant hair shaft through their extensive disulfide bond cross-linking with abundant cysteine residues of hair keratins. The matrix proteins include the high-sulfur and high-glycine-tyrosine keratins. The sequence is that of Keratin-associated protein 20-1 (KRTAP20-1) from Homo sapiens (Human).